A 112-amino-acid chain; its full sequence is UPF0342 protein SPH_1504 (112 aa).

This sequence belongs to the UPF0342 family.

The polypeptide is UPF0342 protein SPH_1504 (Streptococcus pneumoniae (strain Hungary19A-6)).